We begin with the raw amino-acid sequence, 231 residues long: NADH-ubiquinone oxidoreductase chain 4 (231 aa).

The next 6 helical transmembrane spans lie at 1 to 21 (PIAGSMVLAAILLKLGGYGMI), 34 to 54 (MFMPFIVLALWGAILANLTCL), 63 to 85 (IAYSSISHMGLVVAAIIIQTPWG), 89 to 111 (AMALMIAHGFTSSALFCLANTTY), 128 to 148 (ILPMTTTWWLLANLMNIAIPP), and 156 to 176 (FLIMSALFNWAPTTIILLGLS).

Belongs to the complex I subunit 4 family.

The protein resides in the mitochondrion membrane. It carries out the reaction a ubiquinone + NADH + 5 H(+)(in) = a ubiquinol + NAD(+) + 4 H(+)(out). Functionally, core subunit of the mitochondrial membrane respiratory chain NADH dehydrogenase (Complex I) that is believed to belong to the minimal assembly required for catalysis. Complex I functions in the transfer of electrons from NADH to the respiratory chain. The immediate electron acceptor for the enzyme is believed to be ubiquinone. This Bothriechis schlegelii (Eyelash palm pitviper) protein is NADH-ubiquinone oxidoreductase chain 4 (MT-ND4).